Reading from the N-terminus, the 382-residue chain is Phenylalanine dehydrogenase (382 aa).

Arginine 54 provides a ligand contact to NAD(+). Lysine 78 contacts L-phenylalanine. Lysine 90 acts as the Proton donor/acceptor in catalysis. Residues aspartate 125, serine 156, threonine 160, 190 to 196 (GLGKVGY), 213 to 214 (DI), 253 to 254 (AF), and 274 to 276 (SAN) contribute to the NAD(+) site. Asparagine 276 lines the L-phenylalanine pocket.

This sequence belongs to the Glu/Leu/Phe/Val dehydrogenases family.

The catalysed reaction is L-phenylalanine + NAD(+) + H2O = 3-phenylpyruvate + NH4(+) + NADH + H(+). With respect to regulation, activity is not affected by the metal chelating agent EDTA. Addition of 1 mM Mg(2+) results in 15% increase in activity, while the enzyme is strongly inhibited by 1 mM Fe(3+), Fe(2+), Cu(2+), Zn(2+) and Ag(+). Functionally, catalyzes the reversible NAD(+)-dependent oxidative deamination of L-phenylalanine to phenylpyruvate. Can also catalyze the oxidative deamination of several other amino acids, with much lower efficiency. Shows activity towards various bulky aromatic alpha-keto acids/esters and (S)-amine alcohols. Can catalyze the amination of 3-(2-chlorophenyl)-2-oxopropionic acid (CPOA) to produce 2-chloro-L-phenylalanine (2-Cl-Phe), a chemical compound used in the pharmaceutical and biotechnology industries. Shows a preference for amination over deamination. This is Phenylalanine dehydrogenase from Bacillus thermotolerans (Quasibacillus thermotolerans).